The sequence spans 301 residues: NADH-cytochrome b5 reductase 3 (301 aa).

Residue Gly2 is the site of N-myristoyl glycine attachment. The FAD-binding FR-type domain occupies Asp40–Gln152. N6-acetyllysine is present on Lys42. Tyr43 is subject to Phosphotyrosine. An N6-acetyllysine modification is found at Lys50. Arg92, Pro93, Tyr94, Val109, Lys111, and Phe114 together coordinate FAD. The residue at position 120 (Lys120) is an N6-acetyllysine. Positions 126, 127, 128, and 185 each coordinate FAD.

This sequence belongs to the flavoprotein pyridine nucleotide cytochrome reductase family. Component of a complex composed of cytochrome b5, NADH-cytochrome b5 reductase (CYB5R3) and MTARC2. Interacts with MTLN; the interaction is required to maintain cellular lipid composition and leads to stimulation of mitochondrial respiratory complex I activity. It depends on FAD as a cofactor.

It is found in the endoplasmic reticulum membrane. Its subcellular location is the mitochondrion outer membrane. The catalysed reaction is 2 Fe(III)-[cytochrome b5] + NADH = 2 Fe(II)-[cytochrome b5] + NAD(+) + H(+). In terms of biological role, catalyzes the reduction of two molecules of cytochrome b5 using NADH as the electron donor. The polypeptide is NADH-cytochrome b5 reductase 3 (CYB5R3) (Bos taurus (Bovine)).